The primary structure comprises 379 residues: Homoserine O-succinyltransferase (379 aa).

The AB hydrolase-1 domain occupies 51-360 (NAVLICHALS…DAPQGHDAFL (310 aa)). Catalysis depends on S157, which acts as the Nucleophile. R227 contributes to the substrate binding site. Catalysis depends on residues D323 and H356. D357 is a binding site for substrate.

Belongs to the AB hydrolase superfamily. MetX family. In terms of assembly, homodimer.

It is found in the cytoplasm. It catalyses the reaction L-homoserine + succinyl-CoA = O-succinyl-L-homoserine + CoA. The protein operates within amino-acid biosynthesis; L-methionine biosynthesis via de novo pathway; O-succinyl-L-homoserine from L-homoserine: step 1/1. Requires MetW for activity. Transfers a succinyl group from succinyl-CoA to L-homoserine, forming succinyl-L-homoserine. This Pseudomonas syringae pv. syringae (strain B728a) protein is Homoserine O-succinyltransferase.